The primary structure comprises 749 residues: Cytosolic phospholipase A2 (749 aa).

The interval 1-178 is phospholipid binding; that stretch reads MSFIDPYQHI…MKKLLGPKNS (178 aa). Serine 2 carries the phosphoserine modification. In terms of domain architecture, C2 spans 6-122; sequence PYQHIIVEHQ…KVGEKKEVPF (117 aa). Ca(2+) is bound by residues aspartate 40, threonine 41, aspartate 43, asparagine 65, aspartate 93, alanine 94, and asparagine 95. The PLA2c domain occupies 140 to 740; that stretch reads SCPDLRFSMA…SNVEARRFFN (601 aa). Catalysis depends on serine 228, which acts as the Nucleophile. Threonine 268 bears the Phosphothreonine mark. Positions 409-457 are disordered; sequence GSQSRGSTMEEELENITTKHIVSNDSSDSDDESHEPKGTENEDAGSDYQ. A phosphoserine mark is found at serine 434, serine 435, and serine 437. Serine 505 is modified (phosphoserine; by MAPK). Serine 515 is subject to Phosphoserine. Lysine 541 participates in a covalent cross-link: Glycyl lysine isopeptide (Lys-Gly) (interchain with G-Cter in SUMO2). Aspartate 549 serves as the catalytic Proton acceptor. Lysine 606 participates in a covalent cross-link: Glycyl lysine isopeptide (Lys-Gly) (interchain with G-Cter in SUMO2). 2 positions are modified to phosphoserine: serine 727 and serine 729.

As to quaternary structure, interacts with KAT5. Post-translationally, phosphorylated at both Ser-505 and Ser-727 in response to mitogenic stimuli. In terms of tissue distribution, expressed in various cells and tissues such as macrophages, neutrophils, fibroblasts and lung endothelium. Expressed in platelets (at protein level).

Its subcellular location is the cytoplasm. The protein resides in the golgi apparatus membrane. It localises to the nucleus envelope. It carries out the reaction a 1,2-diacyl-sn-glycero-3-phosphocholine + H2O = a 1-acyl-sn-glycero-3-phosphocholine + a fatty acid + H(+). The enzyme catalyses a 1-O-alkyl-2-acyl-sn-glycero-3-phosphocholine + H2O = a 1-O-alkyl-sn-glycero-3-phosphocholine + a fatty acid + H(+). It catalyses the reaction a 1-acyl-sn-glycero-3-phosphocholine + H2O = sn-glycerol 3-phosphocholine + a fatty acid + H(+). The catalysed reaction is 1-hexadecanoyl-2-(5Z,8Z,11Z,14Z-eicosatetraenoyl)-sn-glycero-3-phosphocholine + H2O = 1-hexadecanoyl-sn-glycero-3-phosphocholine + (5Z,8Z,11Z,14Z)-eicosatetraenoate + H(+). It carries out the reaction 1,2-di-(5Z,8Z,11Z,14Z-eicosatetraenoyl)-sn-glycero-3-phosphocholine + H2O = 1-(5Z,8Z,11Z,14Z-eicosatetraenoyl)-sn-glycero-3-phosphocholine + (5Z,8Z,11Z,14Z)-eicosatetraenoate + H(+). The enzyme catalyses 1-octadecanoyl-2-(5Z,8Z,11Z,14Z-eicosatetraenoyl)-sn-glycero-3-phosphocholine + H2O = 1-octadecanoyl-sn-glycero-3-phosphocholine + (5Z,8Z,11Z,14Z)-eicosatetraenoate + H(+). It catalyses the reaction 1-hexadecanoyl-2-(9Z,12Z-octadecadienoyl)-sn-glycero-3-phosphocholine + H2O = (9Z,12Z)-octadecadienoate + 1-hexadecanoyl-sn-glycero-3-phosphocholine + H(+). The catalysed reaction is 1-octadecanoyl-2-(9Z,12Z,15Z-octadecatrienoyl)-sn-glycero-3-phosphocholine + H2O = (9Z,12Z,15Z)-octadecatrienoate + 1-octadecanoyl-sn-glycero-3-phosphocholine + H(+). It carries out the reaction 1-(5Z,8Z,11Z,14Z-eicosatetraenoyl)-2-hexadecanoyl-sn-glycero-3-phosphocholine + H2O = 1-(5Z,8Z,11Z,14Z-eicosatetraenoyl)-sn-glycero-3-phosphocholine + hexadecanoate + H(+). The enzyme catalyses 1-O-hexadecyl-2-(5Z,8Z,11Z,14Z)-eicosatetraenoyl-sn-glycero-3-phosphocholine + H2O = 1-O-hexadecyl-sn-glycero-3-phosphocholine + (5Z,8Z,11Z,14Z)-eicosatetraenoate + H(+). It catalyses the reaction 1,2-di-(9Z-octadecenoyl)-sn-glycero-3-phospho-(1'-sn-glycerol) + H2O = 1-(9Z-octadecenoyl)-sn-glycero-3-phospho-(1'-sn-glycerol) + (9Z)-octadecenoate + H(+). The catalysed reaction is 1-octadecanoyl-2-(5Z,8Z,11Z,14Z-eicosatetraenoyl)-sn-glycero-3-phosphate + H2O = 1-octadecanoyl-sn-glycero-3-phosphate + (5Z,8Z,11Z,14Z)-eicosatetraenoate + H(+). It carries out the reaction 1-hexadecanoyl-sn-glycero-3-phosphocholine + H2O = sn-glycerol 3-phosphocholine + hexadecanoate + H(+). The enzyme catalyses 2-(prostaglandin E2)-sn-glycero-3-phosphoethanolamine + H2O = sn-glycero-3-phosphoethanolamine + prostaglandin E2 + H(+). It catalyses the reaction 2-[(15S)-hydroxy-(5Z,8Z,11Z,13E)-eicosatetraenoyl]-sn-glycero-3-phosphocholine + H2O = (15S)-hydroxy-(5Z,8Z,11Z,13E)-eicosatetraenoate + sn-glycerol 3-phosphocholine + H(+). The catalysed reaction is 2-[(15R)-hydroxy-(5Z,8Z,11Z,13E)-eicosatetraenoyl]-sn-glycero-3-phosphocholine + H2O = (15R)-hydroxy-(5Z,8Z,11Z,13E)-eicosatetraenoate + sn-glycerol 3-phosphocholine + H(+). It carries out the reaction 2-(prostaglandin E2)-sn-glycero-3-phosphocholine + H2O = prostaglandin E2 + sn-glycerol 3-phosphocholine + H(+). The enzyme catalyses 2-[(11R)-hydroxy-(5Z,8Z,12E,14Z)-eicosatetraenoyl]-sn-glycero-3-phosphocholine + H2O = (11R)-hydroxy-(5Z,8Z,12E,14Z)-eicosatetraenoate + sn-glycerol 3-phosphocholine + H(+). It catalyses the reaction 1-(5Z,8Z,11Z,14Z-eicosatetraenoyl)-2-O-hexadecyl-sn-glycero-3-phosphocholine + H2O = 2-O-hexadecyl-sn-glycero-3-phosphocholine + (5Z,8Z,11Z,14Z)-eicosatetraenoate + H(+). The catalysed reaction is 1-octadecanoyl-2-(5Z,8Z,11Z,14Z-eicosatetraenoyl)-sn-glycero-3-phosphocholine + glycerol = 1-(5Z,8Z,11Z,14Z-eicosatetraenoyl)-glycerol + 1-octadecanoyl-sn-glycero-3-phosphocholine. It carries out the reaction 1-octadecanoyl-2-(9Z,12Z,15Z-octadecatrienoyl)-sn-glycero-3-phosphocholine + glycerol = 1-(9Z,12Z,15Z-octadecatrienoyl)-glycerol + 1-octadecanoyl-sn-glycero-3-phosphocholine. It functions in the pathway membrane lipid metabolism; glycerophospholipid metabolism. The protein operates within lipid metabolism; arachidonate metabolism. It participates in lipid metabolism; prostaglandin biosynthesis. Its pathway is lipid metabolism; leukotriene B4 biosynthesis. Activated by cytosolic calcium, which is necessary for binding to membrane lipids. Activated by phosphorylation in response to mitogenic stimuli. Activated by ceramide-1-phosphate. Binding (via C2 domain) to ceramide-1-phosphate increases the affinity for membrane lipids. Can be activated by phosphoinositides in the absence of calcium. Inhibited by ANXA5 in a calcium- and substrate-dependent way. Has primarily calcium-dependent phospholipase and lysophospholipase activities, with a major role in membrane lipid remodeling and biosynthesis of lipid mediators of the inflammatory response. Plays an important role in embryo implantation and parturition through its ability to trigger prostanoid production. Preferentially hydrolyzes the ester bond of the fatty acyl group attached at sn-2 position of phospholipids (phospholipase A2 activity). Selectively hydrolyzes sn-2 arachidonoyl group from membrane phospholipids, providing the precursor for eicosanoid biosynthesis via the cyclooxygenase pathway. In an alternative pathway of eicosanoid biosynthesis, hydrolyzes sn-2 fatty acyl chain of eicosanoid lysophopholipids to release free bioactive eicosanoids. Hydrolyzes the ester bond of the fatty acyl group attached at sn-1 position of phospholipids (phospholipase A1 activity) only if an ether linkage rather than an ester linkage is present at the sn-2 position. This hydrolysis is not stereospecific. Has calcium-independent phospholipase A2 and lysophospholipase activities in the presence of phosphoinositides. Has O-acyltransferase activity. Catalyzes the transfer of fatty acyl chains from phospholipids to a primary hydroxyl group of glycerol (sn-1 or sn-3), potentially contributing to monoacylglycerol synthesis. This Homo sapiens (Human) protein is Cytosolic phospholipase A2 (PLA2G4A).